The sequence spans 337 residues: Glucokinase (337 aa).

11 to 16 is a binding site for ATP; sequence ADIGGT.

Belongs to the bacterial glucokinase family.

It localises to the cytoplasm. It catalyses the reaction D-glucose + ATP = D-glucose 6-phosphate + ADP + H(+). The chain is Glucokinase from Xylella fastidiosa (strain 9a5c).